Reading from the N-terminus, the 298-residue chain is Tyrosine recombinase XerD (298 aa).

The 86-residue stretch at 3–88 (SSHNNLLQNF…AIRQFYKFLK (86 aa)) folds into the Core-binding (CB) domain. Positions 109–292 (SIPDYLTQDE…ANKTLREVHK (184 aa)) constitute a Tyr recombinase domain. Active-site residues include Arg149, Lys173, His244, Arg247, and His270. Residue Tyr279 is the O-(3'-phospho-DNA)-tyrosine intermediate of the active site.

The protein belongs to the 'phage' integrase family. XerD subfamily. Forms a cyclic heterotetrameric complex composed of two molecules of XerC and two molecules of XerD.

The protein localises to the cytoplasm. Site-specific tyrosine recombinase, which acts by catalyzing the cutting and rejoining of the recombining DNA molecules. The XerC-XerD complex is essential to convert dimers of the bacterial chromosome into monomers to permit their segregation at cell division. It also contributes to the segregational stability of plasmids. The protein is Tyrosine recombinase XerD of Leptospira interrogans serogroup Icterohaemorrhagiae serovar copenhageni (strain Fiocruz L1-130).